The sequence spans 399 residues: Argininosuccinate synthase (399 aa).

Position 9–17 (9–17 (AYSGGLDTS)) interacts with ATP. Tyr85 provides a ligand contact to L-citrulline. Residue Gly115 coordinates ATP. Residues Thr117, Asn121, and Asp122 each coordinate L-aspartate. Residue Asn121 participates in L-citrulline binding. Residues Arg125, Ser173, Glu258, and Tyr270 each coordinate L-citrulline.

It belongs to the argininosuccinate synthase family. Type 1 subfamily. As to quaternary structure, homotetramer.

Its subcellular location is the cytoplasm. It catalyses the reaction L-citrulline + L-aspartate + ATP = 2-(N(omega)-L-arginino)succinate + AMP + diphosphate + H(+). It participates in amino-acid biosynthesis; L-arginine biosynthesis; L-arginine from L-ornithine and carbamoyl phosphate: step 2/3. The polypeptide is Argininosuccinate synthase (Streptococcus gordonii (strain Challis / ATCC 35105 / BCRC 15272 / CH1 / DL1 / V288)).